The chain runs to 190 residues: Translation machinery-associated protein 22 (190 aa).

Residues Leu-63 to Glu-83 form a disordered region. The SUI1 domain occupies Val-99–Phe-170.

This sequence belongs to the DENR family. In terms of assembly, interacts with the 40S ribosomal subunit.

The protein localises to the cytoplasm. This is Translation machinery-associated protein 22 (tma22) from Schizosaccharomyces pombe (strain 972 / ATCC 24843) (Fission yeast).